The sequence spans 83 residues: Large ribosomal subunit protein bL27 (83 aa).

Belongs to the bacterial ribosomal protein bL27 family.

The protein is Large ribosomal subunit protein bL27 of Bifidobacterium adolescentis (strain ATCC 15703 / DSM 20083 / NCTC 11814 / E194a).